A 161-amino-acid chain; its full sequence is Putative esterase C31F10.02 (161 aa).

The protein belongs to the thioesterase PaaI family.

The protein is Putative esterase C31F10.02 of Schizosaccharomyces pombe (strain 972 / ATCC 24843) (Fission yeast).